Reading from the N-terminus, the 286-residue chain is MKVIKTLSIINFFIFVTFNIKNESKYSNTFINNAYNMSIRRSMTESKTPTPTGAGAGASGSAGSGDGASGSASGSASGSASGSAGASGSASGSAGASGSASGSAGAEGSPSTPATTTTTTTTNDAEASTSTSSENPNHNNAKTNPKGNGGVQKPNQANKETQNNSNVQQDSQTKSNVPPTQDADTKSPTAQPEQAENSAPTAEQTESPELQSAPENKGTGQHGHMHGSRNNHPQNTSDSQKECTDGNKENCGAATSLLNNSSNIASINKFVVLISATLVLSFAIFI.

Residues 1-20 form the signal peptide; it reads MKVIKTLSIINFFIFVTFNI. Residues Asn-22 and Asn-36 are each glycosylated (N-linked (GlcNAc...) asparagine). Residues 43–248 form a disordered region; sequence MTESKTPTPT…SQKECTDGNK (206 aa). The interval 44-212 is polymorphic region; that stretch reads TESKTPTPTG…EQTESPELQS (169 aa). A compositionally biased stretch (gly residues) spans 54 to 68; sequence AGAGASGSAGSGDGA. Residues 59–68 form repeat 1; sequence SGSAGSGDGA. The tract at residues 59–106 is 5 X 10 AA tandem repeats of S-G-S-A-[GS]-[GS]-[AD]-G-A; the sequence is SGSAGSGDGASGSASGSASGSASGSAGASGSASGSAGASGSASGSAGA. A 2; partial repeat occupies 69 to 76; that stretch reads SGSASGSA. Positions 69–137 are enriched in low complexity; the sequence is SGSASGSASG…STSTSSENPN (69 aa). A run of 3 repeats spans residues 77-86, 88-96, and 97-106. 2 stretches are compositionally biased toward polar residues: residues 153 to 179 and 186 to 214; these read KPNQ…NVPP and KSPT…QSAP. Asn-163 carries an N-linked (GlcNAc...) asparagine glycan. Residue Asn-235 is glycosylated (N-linked (GlcNAc...) asparagine). Positions 239–248 are enriched in basic and acidic residues; it reads SQKECTDGNK. An intrachain disulfide couples Cys-243 to Cys-251. Asn-259 and Asn-260 each carry an N-linked (GlcNAc...) asparagine glycan. The GPI-anchor amidated asparagine moiety is linked to residue Asn-260. The propeptide at 261-286 is removed in mature form; sequence SSNIASINKFVVLISATLVLSFAIFI.

It is found in the cell membrane. May play a role in the merozoite attachment to the erythrocyte. This Plasmodium falciparum (isolate 311) protein is Merozoite surface protein 2.